The following is a 978-amino-acid chain: Regulator of MON1-CCZ1 complex homolog (978 aa).

Composition is skewed to low complexity over residues 311–351 and 479–495; these read TSTP…MISS and NNNN…NNNN. Disordered stretches follow at residues 311 to 363, 474 to 546, 558 to 665, and 703 to 727; these read TSTP…HKEQ, SINQ…NSKT, KQQQ…NNHV, and EKEK…NNNI. Residues 496–515 show a composition bias toward polar residues; sequence TAQTLNSTGNLSNSISIGGM. Low complexity predominate over residues 516–539; sequence NTSTDNLTTTTTTSSSISSSPSNS. Residues 582-591 show a composition bias toward gly residues; it reads GDGGSGGSGG. Composition is skewed to low complexity over residues 592–663 and 710–727; these read SFYN…NNNN and NNNN…NNNI. The region spanning 735 to 908 is the Mic1 domain; the sequence is KLELDSKYLI…HPSFDKYIKL (174 aa). The disordered stretch occupies residues 955–978; the sequence is NNSSPTLRSSNSLNSSPRLQYSNN.

This sequence belongs to the RMC1 family.

The protein resides in the lysosome membrane. Its subcellular location is the late endosome membrane. May have a role in autophagy. The polypeptide is Regulator of MON1-CCZ1 complex homolog (Dictyostelium discoideum (Social amoeba)).